The following is a 260-amino-acid chain: 5-oxoprolinase subunit A (260 aa).

Belongs to the LamB/PxpA family. As to quaternary structure, forms a complex composed of PxpA, PxpB and PxpC.

It carries out the reaction 5-oxo-L-proline + ATP + 2 H2O = L-glutamate + ADP + phosphate + H(+). Its function is as follows. Catalyzes the cleavage of 5-oxoproline to form L-glutamate coupled to the hydrolysis of ATP to ADP and inorganic phosphate. This Methylococcus capsulatus (strain ATCC 33009 / NCIMB 11132 / Bath) protein is 5-oxoprolinase subunit A.